The sequence spans 305 residues: Ribonuclease BN (305 aa).

Zn(2+)-binding residues include His-64, His-66, Asp-68, His-69, His-141, Asp-212, and His-270. The Proton acceptor role is filled by Asp-68.

This sequence belongs to the RNase Z family. RNase BN subfamily. Homodimer. Zn(2+) serves as cofactor.

Zinc phosphodiesterase, which has both exoribonuclease and endoribonuclease activities. This Enterobacter sp. (strain 638) protein is Ribonuclease BN.